A 409-amino-acid polypeptide reads, in one-letter code: TNF receptor-associated factor family protein DDB_G0273435/DDB_G0273505 (409 aa).

An RING-type; degenerate zinc finger spans residues 20–59; that stretch reads CQLCCNLMNESVSCPNGHCLCKGCFHKQIETVKSECPICC. 2 consecutive TRAF-type zinc fingers follow at residues 75-145 and 145-201; these read KHIN…EIEN and NHQD…HELS. A coiled-coil region spans residues 221-250; that stretch reads HQSLLKSTSKQLKQLRSSCEELETKLINND. One can recognise an MATH domain in the interval 252–380; the sequence is SFNGRWIIKQ…NDQLIIKFNI (129 aa).

This sequence belongs to the TNF receptor-associated factor family. A subfamily.

Its subcellular location is the cytoplasm. Its function is as follows. Probable adapter protein and signal transducer that links members of the tumor necrosis factor receptor family to different signaling pathways by association with the receptor cytoplasmic domain and kinases. In Dictyostelium discoideum (Social amoeba), this protein is TNF receptor-associated factor family protein DDB_G0273435/DDB_G0273505.